A 538-amino-acid polypeptide reads, in one-letter code: Anti-bacteriophage protein A (538 aa).

As to quaternary structure, interacts with AbpB.

Its function is as follows. Part of an antiviral system composed of AbpA and AbpB; when both are expressed from a plasmid they confer resistance to phages T2, T4, T7 and lambda but not RB32 or RB69. Resistance is temperature dependent, it can be seen at 30 degrees Celsius but not at 37 or 42 degrees Celsius. The system impairs phage but not bacterial DNA synthesis (shown for T4, T7 and lambda). Partially suppressed by mutations in T4 gene 41, a replicative helicase. The chain is Anti-bacteriophage protein A from Escherichia coli (strain K12).